The sequence spans 212 residues: Dephospho-CoA kinase (212 aa).

Residues 8 to 212 (LVGVTGGLGS…QLLQQAMLRR (205 aa)) enclose the DPCK domain. Position 16–21 (16–21 (GSGKSM)) interacts with ATP.

This sequence belongs to the CoaE family.

It localises to the cytoplasm. It catalyses the reaction 3'-dephospho-CoA + ATP = ADP + CoA + H(+). It participates in cofactor biosynthesis; coenzyme A biosynthesis; CoA from (R)-pantothenate: step 5/5. Functionally, catalyzes the phosphorylation of the 3'-hydroxyl group of dephosphocoenzyme A to form coenzyme A. The protein is Dephospho-CoA kinase of Chlorobium chlorochromatii (strain CaD3).